The following is a 432-amino-acid chain: C(50) beta-cyclic carotenoids biosynthesis protein LbtBC (432 aa).

Residues 1 to 140 are beta-cyclase; sequence MTSLYTTLNL…DDDEVRTPER (140 aa). Transmembrane regions (helical) follow at residues 4–24, 36–56, and 83–103; these read LYTT…LLAA, LIGV…FDNI, and FAYA…LTAS. The disordered stretch occupies residues 111-140; the sequence is GSPTVSGRGDALLTRAPEPGDDDEVRTPER. Positions 141-432 are elongase/hydratase; the sequence is PGTPGLLTTL…IVLWSVLVWS (292 aa). The next 7 membrane-spanning stretches (helical) occupy residues 170–190, 252–272, 277–297, 299–319, 350–370, 374–394, and 409–429; these read YFLA…FFLV, ESSL…AKGL, IPFL…IVGW, IAGA…MLWG, AAVW…LAAA, ASGA…YVGV, and FLVL…WSVL.

This sequence belongs to the UbiA prenyltransferase family. May form a complex with LbtA.

It is found in the cell membrane. It carries out the reaction all-trans-lycopene + dimethylallyl diphosphate + H2O = dihydroisopentenyldehydrorhodopin + diphosphate. It catalyses the reaction isopentenyldehydrorhodopin + dimethylallyl diphosphate + H2O = dihydrobisanhydrobacterioruberin + diphosphate. Its pathway is carotenoid biosynthesis. Functionally, involved in the biosynthesis of C(50) beta-cyclic carotenoids. The elongase/hydratase domain catalyzes the elongation of lycopene by attaching a C(5) isoprene unit at C-2, as well as the hydroxylation of the previous end of the molecule. The enzyme acts at both ends of the substrate, and catalyzes the conversion of lycopene to the C(45) intermediate dihydroisopentenyldehydrorhodopin (DH-IDR) and the conversion of isopentenyldehydrorhodopin (IDR) to the C(50) carotenoid dihydrobisanhydrobacterioruberin (DH-BABR). The beta-cyclase domain may produce the C(50) beta-cyclic carotenoid C.p.450 from the C(50) carotenoid dihydrobisanhydrobacterioruberin (DH-BABR). This is C(50) beta-cyclic carotenoids biosynthesis protein LbtBC from Dietzia sp. (strain CQ4).